The chain runs to 324 residues: Large ribosomal subunit protein uL3m (324 aa).

A mitochondrion-targeting transit peptide spans 1–41; that stretch reads MAAVPRGLLSRINQFLSIRSITPSSSESLPHCSSFFLIRRF. Residues 206–229 form a disordered region; that stretch reads PASHGASLSHRSGGSTGQRDAPGK.

Belongs to the universal ribosomal protein uL3 family. Part of the 50S ribosomal subunit.

Its subcellular location is the mitochondrion. Its function is as follows. One of the primary rRNA binding proteins, it binds directly near the 3'-end of the 23S rRNA, where it nucleates assembly of the 50S subunit. The protein is Large ribosomal subunit protein uL3m of Arabidopsis thaliana (Mouse-ear cress).